The following is a 556-amino-acid chain: Polypeptide N-acetylgalactosaminyltransferase 13 (556 aa).

Residues 1 to 4 (MRRL) lie on the Cytoplasmic side of the membrane. A helical; Signal-anchor for type II membrane protein membrane pass occupies residues 5–27 (VYCKVVLATSLMWVLVDVFLLLY). The Lumenal portion of the chain corresponds to 28–556 (FSECNKCDDK…WLLRNMTLGT (529 aa)). Residues N94 and N116 are each glycosylated (N-linked (GlcNAc...) asparagine). 5 cysteine pairs are disulfide-bonded: C105-C338, C329-C407, C441-C458, C481-C496, and C522-C539. The tract at residues 114 to 224 (LPNTSVVIVF…LGWLEPLLAR (111 aa)) is catalytic subdomain A. The substrate site is built by D155 and R185. Mn(2+) contacts are provided by D208 and H210. The interval 284 to 346 (PVRTPTMAGG…TCSHVGHVFR (63 aa)) is catalytic subdomain B. A substrate-binding site is contributed by W315. Position 343 (H343) interacts with Mn(2+). The substrate site is built by R346 and Y351. A Ricin B-type lectin domain is found at 428–550 (YSLGEIRNVE…GSRSQQWLLR (123 aa)). N551 carries N-linked (GlcNAc...) asparagine glycosylation.

It belongs to the glycosyltransferase 2 family. GalNAc-T subfamily. Requires Mn(2+) as cofactor.

It is found in the golgi apparatus membrane. The enzyme catalyses L-seryl-[protein] + UDP-N-acetyl-alpha-D-galactosamine = a 3-O-[N-acetyl-alpha-D-galactosaminyl]-L-seryl-[protein] + UDP + H(+). It carries out the reaction L-threonyl-[protein] + UDP-N-acetyl-alpha-D-galactosamine = a 3-O-[N-acetyl-alpha-D-galactosaminyl]-L-threonyl-[protein] + UDP + H(+). It functions in the pathway protein modification; protein glycosylation. Its function is as follows. Catalyzes the initial reaction in O-linked oligosaccharide biosynthesis, the transfer of an N-acetyl-D-galactosamine (GalNAc) residue from UDP-GalNAc to a serine or threonine residue on the protein receptor. Generates GalNAc-O-Ser/Thr structure also known as Tn antigen, which itself is immunogenic but also serves as a precursor for the synthesis of different mucin-type O-glycan core structures. Contributes to the synthesis of O-linked glycans on mucins and proteoglycans of the central nervous system. Can glycosylate both unmodified peptides and glycopeptides that already contain an O-linked GalNAc sugar. Transfers GalNAc to Thr-/Ser-rich tandem repeats GTTPSPVPTTSTTSAP of MUC5AC. Transfers GalNAc to three consecutive serine/threonine residues on SDC3 forming a triplet-Tn epitope expressed in Purkinje cells of the developing brain. May promote neurogenesis through glycosylation and stabilization of PDPN. The protein is Polypeptide N-acetylgalactosaminyltransferase 13 (Galnt13) of Rattus norvegicus (Rat).